The primary structure comprises 1368 residues: DNA-directed RNA polymerase subunit beta (1368 aa).

Belongs to the RNA polymerase beta chain family. The RNAP catalytic core consists of 2 alpha, 1 beta, 1 beta' and 1 omega subunit. When a sigma factor is associated with the core the holoenzyme is formed, which can initiate transcription.

The catalysed reaction is RNA(n) + a ribonucleoside 5'-triphosphate = RNA(n+1) + diphosphate. Functionally, DNA-dependent RNA polymerase catalyzes the transcription of DNA into RNA using the four ribonucleoside triphosphates as substrates. In Burkholderia ambifaria (strain MC40-6), this protein is DNA-directed RNA polymerase subunit beta.